A 102-amino-acid polypeptide reads, in one-letter code: Small ribosomal subunit protein uS10 (102 aa).

The protein belongs to the universal ribosomal protein uS10 family. In terms of assembly, part of the 30S ribosomal subunit.

Involved in the binding of tRNA to the ribosomes. This is Small ribosomal subunit protein uS10 from Streptococcus uberis (strain ATCC BAA-854 / 0140J).